We begin with the raw amino-acid sequence, 287 residues long: MFGLLRHLFKFQFLFVVAAVLGGIYHTEIRQFLRRQTDNYLDQAGQDASIPLAFQAGDDIGTLFTPAELAKFNGEEEGRPLYLALLGSVFDVSRGIKHYGSGCSYNFFVGRDASVSFISGDFETYDPETADDVLTLKPDDLIGLAGWRDFYQKDYVYKGRVIGRFYDEKGALTTYHHKFLELLEQARDAKRQVEELRARYPGCNIEWSEERGTRVWCTTTSGDGKERSWIGYPRKLYSRGNKSFQCACVPDAELDEIDAGGKVAHGDAMLKPYDNCEPQARECFYRV.

The signal sequence occupies residues methionine 1–glycine 22. The Cytochrome b5 heme-binding domain occupies glycine 61–glycine 146. A coiled-coil region spans residues tyrosine 175–asparagine 204.

The protein belongs to the cytochrome b5 family. MAPR subfamily.

Its subcellular location is the secreted. Heme-binding protein. This Drosophila melanogaster (Fruit fly) protein is Neuferricin homolog.